A 321-amino-acid chain; its full sequence is Protein ATP1B4 (321 aa).

The interval 1–41 (MEPGMEMNTASEGGTRRGPENKHEEKVQDPNRGEAETKAEM) is disordered. The Cytoplasmic portion of the chain corresponds to 1-72 (MEPGMEMNTA…RTCMGRTAKS (72 aa)). Residues 14 to 41 (GTRRGPENKHEEKVQDPNRGEAETKAEM) show a composition bias toward basic and acidic residues. Residues 73–93 (WGLILLFYFIFYTCLAGMFAF) form a helical membrane-spanning segment. Over 94–321 (CMYVMLLTLS…RIIFTLSIGK (228 aa)) the chain is Extracellular. 3 N-linked (GlcNAc...) asparagine glycosylation sites follow: asparagine 132, asparagine 176, and asparagine 193. Cysteine 165 and cysteine 184 are disulfide-bonded. 2 disulfides stabilise this stretch: cysteine 194–cysteine 210 and cysteine 233–cysteine 293. Asparagine 239, asparagine 252, and asparagine 270 each carry an N-linked (GlcNAc...) asparagine glycan.

Belongs to the X(+)/potassium ATPases subunit beta family. In terms of assembly, composed of two subunits: alpha (catalytic) and beta (accessory). Post-translationally, glycosylated. Expressed in skeletal muscle, intestine, heart, brain, retina, inner ear and skin.

The protein localises to the membrane. Its function is as follows. This is the non-catalytic component of the active enzyme, which catalyzes the hydrolysis of ATP coupled with the exchange of Na(+) and K(+) ions across the plasma membrane. In Gallus gallus (Chicken), this protein is Protein ATP1B4 (ATP1B4).